The primary structure comprises 708 residues: O-antigen chain terminator bifunctional methyltransferase/kinase WbdD (708 aa).

The methyltransferase stretch occupies residues 1–210 (MTKDLNTLVS…VPRPMYLVSN (210 aa)). S-adenosyl-L-methionine contacts are provided by residues 16–17 (YQ), Arg-36, Gly-61, 82–87 (DFQQEN), 108–111 (GRIE), and Leu-128. The kinase stretch occupies residues 211-459 (HRVLINDFNQ…AKLPSAEQQR (249 aa)). Residues Pro-229, His-237, 241–243 (RRY), Lys-252, Glu-274, 309–311 (EKL), Met-358, and Asp-369 each bind ATP. A coiled-coil region spans residues 485–594 (AGSEALRGQI…EIEKIHRSRS (110 aa)). Residues 601–669 (YRYLGLQIHL…RLYRRMNPLP (69 aa)) are required for membrane-binding. The required for localizing WbdA to the membrane stretch occupies residues 687-708 (VMHPELLPPEVYEIYLKLTKNK).

It belongs to the WbdD family. As to quaternary structure, interacts with WbdA.

The protein localises to the cell inner membrane. It carries out the reaction 3-O-phospho-alpha-D-Man-(1-&gt;2)-alpha-D-Man-(1-&gt;2)-[alpha-D-Man-(1-&gt;3)-alpha-D-Man-(1-&gt;3)-alpha-D-Man-(1-&gt;2)-alpha-D-Man-(1-&gt;2)](n)-alpha-D-Man-(1-&gt;3)-alpha-D-Man-(1-&gt;3)-alpha-D-Man-(1-&gt;3)-alpha-D-GlcNAc-di-trans,octa-cis-undecaprenyl diphosphate + S-adenosyl-L-methionine = 3-O-methylphospho-alpha-D-Man-(1-&gt;2)-alpha-D-Man-(1-&gt;2)-[alpha-D-Man-(1-&gt;3)-alpha-D-Man-(1-&gt;3)-alpha-D-Man-(1-&gt;2)-alpha-D-Man-(1-&gt;2)](n)-alpha-D-Man-(1-&gt;3)-alpha-D-Man-(1-&gt;3)-alpha-D-Man-(1-&gt;3)-alpha-D-GlcNAc-di-trans,octa-cis-undecaprenyl diphosphate + S-adenosyl-L-homocysteine. The enzyme catalyses alpha-D-Man-(1-&gt;2)-alpha-D-Man-(1-&gt;2)-[alpha-D-Man-(1-&gt;3)-alpha-D-Man-(1-&gt;3)-alpha-D-Man-(1-&gt;2)-alpha-D-Man-(1-&gt;2)](n)-alpha-D-Man-(1-&gt;3)-alpha-D-Man-(1-&gt;3)-alpha-D-Man-(1-&gt;3)-alpha-D-GlcNAc-di-trans,octa-cis-undecaprenyl diphosphate + ATP = 3-O-phospho-alpha-D-Man-(1-&gt;2)-alpha-D-Man-(1-&gt;2)-[alpha-D-Man-(1-&gt;3)-alpha-D-Man-(1-&gt;3)-alpha-D-Man-(1-&gt;2)-alpha-D-Man-(1-&gt;2)](n)-alpha-D-Man-(1-&gt;3)-alpha-D-Man-(1-&gt;3)-alpha-D-Man-(1-&gt;3)-alpha-D-GlcNAc-di-trans,octa-cis-undecaprenyl diphosphate + ADP + H(+). It functions in the pathway bacterial outer membrane biogenesis; LPS O-antigen biosynthesis. Functionally, regulates the length of the LPS O-antigen polysaccharide chain. Stops the polymerization of the chain by phosphorylating and then methylating the phosphate on the terminal sugar. This terminal modification is essential for export of the O-antigen across the inner membrane. WbdD is also required for correct localization of the WbdA mannosyltransferase. The polypeptide is O-antigen chain terminator bifunctional methyltransferase/kinase WbdD (Escherichia coli).